We begin with the raw amino-acid sequence, 358 residues long: Peptide chain release factor 1 (358 aa).

Residue Gln-233 is modified to N5-methylglutamine. Over residues 282–306 (QRAASERSADRRGQVGSGDRSERVR) the composition is skewed to basic and acidic residues. Positions 282 to 308 (QRAASERSADRRGQVGSGDRSERVRTY) are disordered.

Belongs to the prokaryotic/mitochondrial release factor family. Methylated by PrmC. Methylation increases the termination efficiency of RF1.

Its subcellular location is the cytoplasm. In terms of biological role, peptide chain release factor 1 directs the termination of translation in response to the peptide chain termination codons UAG and UAA. The sequence is that of Peptide chain release factor 1 from Afipia carboxidovorans (strain ATCC 49405 / DSM 1227 / KCTC 32145 / OM5) (Oligotropha carboxidovorans).